We begin with the raw amino-acid sequence, 498 residues long: Histidine--tRNA ligase (498 aa).

This sequence belongs to the class-II aminoacyl-tRNA synthetase family. In terms of assembly, homodimer.

The protein localises to the cytoplasm. It catalyses the reaction tRNA(His) + L-histidine + ATP = L-histidyl-tRNA(His) + AMP + diphosphate + H(+). This Bartonella quintana (strain Toulouse) (Rochalimaea quintana) protein is Histidine--tRNA ligase.